The following is a 436-amino-acid chain: MTNPVVAIVGRPNVGKSTIFNRIVGERISIVEDVPGVTRDRIYSSAEWLNHKFYLIDTGGIDIGDEPLLVQIRQQAEIAIDEADVIIFMVNGRDGVTAADEEVAKILHRSNKPVVLAVNKIDNPEMRDLIYDFYALGFGDPYPISGSHGTGLGDLLDAVARHFPKRGQEEYEEDVIKFCLIGRPNVGKSSLVNAILGEERVIVSDIAGTTRDAVDTTFVREGQEYVIIDTAGMRKRGKIYESTEKYSVLRALKAIERSDVVLVVLNAEEGIIEQDKKIAGYAHEAGRGVIIVVNKWDAIEKDDKTLIEFERKIRDHFPFLDYAPIIFVSAKTKQRLHKLLPLVRMVSENHAMRVQTNVLNEVIMDAVAMNPTPTHNGRRLKIYYMTQVAVKPPTFVVFVNDPELMHFSYERFLENRIRDAFGFEGTPIKIIARPRK.

EngA-type G domains follow at residues 4–167 (PVVA…PKRG) and 176–351 (IKFC…ENHA). Residues 10-17 (GRPNVGKS), 57-61 (DTGGI), 119-122 (NKID), 182-189 (GRPNVGKS), 229-233 (DTAGM), and 294-297 (NKWD) each bind GTP. The region spanning 352–436 (MRVQTNVLNE…PIKIIARPRK (85 aa)) is the KH-like domain.

This sequence belongs to the TRAFAC class TrmE-Era-EngA-EngB-Septin-like GTPase superfamily. EngA (Der) GTPase family. As to quaternary structure, associates with the 50S ribosomal subunit.

Its function is as follows. GTPase that plays an essential role in the late steps of ribosome biogenesis. The polypeptide is GTPase Der (Geobacillus sp. (strain WCH70)).